A 1193-amino-acid chain; its full sequence is Protogenin (1193 aa).

Residues 1 to 23 (MAPPVRPGMLPLLLLLLLPPLGS) form the signal peptide. 4 consecutive Ig-like domains span residues 24–124 (VPGV…AHLT), 126–217 (STIS…ASLT), 230–317 (PTII…ATLT), and 322–406 (PSFV…ARLT). Residues 24–944 (VPGVWSFSEL…YYHLDQKSMT (921 aa)) are Extracellular-facing. 2 cysteine pairs are disulfide-bonded: C54–C107 and C150–C200. A glycan (N-linked (GlcNAc...) asparagine) is linked at N84. N238 carries N-linked (GlcNAc...) asparagine glycosylation. Cystine bridges form between C251-C299 and C343-C390. Fibronectin type-III domains follow at residues 416–510 (APYN…TLED), 512–608 (PLRP…TPKA), 613–712 (APKS…VRDR), 719–812 (PPHH…TLPE), and 817–912 (PPVG…VLPK). N625 is a glycosylation site (N-linked (GlcNAc...) asparagine). Residues 945–965 (GIAVGVGIALTCILICVLILI) form a helical membrane-spanning segment. The Cytoplasmic portion of the chain corresponds to 966-1193 (YRSKARKSSA…LRHAAESVPV (228 aa)). 2 disordered regions span residues 974–1018 (SASK…PMMP) and 1078–1193 (VLIS…SVPV). 2 stretches are compositionally biased toward polar residues: residues 978–990 (TTQSGTQPLSRAS) and 1086–1095 (PSSPGQTTSF). A compositionally biased stretch (basic and acidic residues) spans 1105–1133 (DTEHSANSEGSHETGDSGRFSHESNDEIH). Polar residues predominate over residues 1136 to 1150 (SVISSTPPTSNSLTC).

It belongs to the immunoglobulin superfamily. DCC family.

It is found in the membrane. May play a role in anteroposterior axis elongation. The protein is Protogenin of Rattus norvegicus (Rat).